Here is a 940-residue protein sequence, read N- to C-terminus: UvrABC system protein A (940 aa).

31–38 (GLSGSGKS) serves as a coordination point for ATP. The C4-type zinc finger occupies 253–280 (CPICGYSMRELEPRLFSFNNPAGACPTC). ABC transporter domains lie at 310–587 (WDRR…PESL) and 607–937 (ANPE…RFLK). An ATP-binding site is contributed by 640 to 647 (GVSGSGKS). The segment at 740-766 (CEACQGDGVIKVEMHFLPDIYVPCDQC) adopts a C4-type zinc-finger fold.

It belongs to the ABC transporter superfamily. UvrA family. As to quaternary structure, forms a heterotetramer with UvrB during the search for lesions. Interacts with TRCF (Mfd). UvrB and TRCF binding to UvrA could be mutually exclusive.

It localises to the cytoplasm. Functionally, the UvrABC repair system catalyzes the recognition and processing of DNA lesions. UvrA is an ATPase and a DNA-binding protein. A damage recognition complex composed of 2 UvrA and 2 UvrB subunits scans DNA for abnormalities. When the presence of a lesion has been verified by UvrB, the UvrA molecules dissociate. The polypeptide is UvrABC system protein A (Escherichia coli (strain K12)).